We begin with the raw amino-acid sequence, 269 residues long: GTP cyclohydrolase FolE2 (269 aa).

Belongs to the GTP cyclohydrolase IV family.

It catalyses the reaction GTP + H2O = 7,8-dihydroneopterin 3'-triphosphate + formate + H(+). Its pathway is cofactor biosynthesis; 7,8-dihydroneopterin triphosphate biosynthesis; 7,8-dihydroneopterin triphosphate from GTP: step 1/1. Converts GTP to 7,8-dihydroneopterin triphosphate. The protein is GTP cyclohydrolase FolE2 of Burkholderia ambifaria (strain ATCC BAA-244 / DSM 16087 / CCUG 44356 / LMG 19182 / AMMD) (Burkholderia cepacia (strain AMMD)).